Reading from the N-terminus, the 357-residue chain is UPF0283 membrane protein BMEI0952 (357 aa).

Residues 1–36 (MSDKTPRKPTAFRLEQPARVSAASEQEEPRRPRAVK) form a disordered region. Positions 27-36 (EEPRRPRAVK) are enriched in basic and acidic residues. Helical transmembrane passes span 78–98 (ILFG…TEDL) and 109–129 (LGWT…AIIL).

It belongs to the UPF0283 family.

Its subcellular location is the cell inner membrane. The chain is UPF0283 membrane protein BMEI0952 from Brucella melitensis biotype 1 (strain ATCC 23456 / CCUG 17765 / NCTC 10094 / 16M).